Here is a 247-residue protein sequence, read N- to C-terminus: tRNA pseudouridine synthase A (247 aa).

Residue Asp57 is the Nucleophile of the active site. Position 115 (Tyr115) interacts with substrate.

Belongs to the tRNA pseudouridine synthase TruA family. As to quaternary structure, homodimer.

It carries out the reaction uridine(38/39/40) in tRNA = pseudouridine(38/39/40) in tRNA. Its function is as follows. Formation of pseudouridine at positions 38, 39 and 40 in the anticodon stem and loop of transfer RNAs. The chain is tRNA pseudouridine synthase A from Chlorobaculum tepidum (strain ATCC 49652 / DSM 12025 / NBRC 103806 / TLS) (Chlorobium tepidum).